A 114-amino-acid polypeptide reads, in one-letter code: Protein ORF3 (114 aa).

Hydrophobic regions lie at residues Cys6–Cys22 and Ala33–Leu53. Positions Val28–Pro68 are interaction with host HPX. Residues Pro72 to Arg114 form a homodimerization, and interaction with host AMBP/bikunin region. Residues Leu91–Arg114 form a disordered region. Residues Arg95 to Val104 are interaction with host SRC, HCK, FYN, PIK3R3 and GRB2. The short motif at Pro96–Pro99 is the PTAP/PSAP motif element.

Belongs to the hepevirus ORF3 protein family. In terms of assembly, forms homooligomers. Interacts with host SRC, HCK, FYN, PIK3R3 and GRB2 (via SH3 domain); binding does not activate the kinases. Interacts with host AMBP/bikunin and AMBP/alpha-1-microglobulin peptides. Interacts with host HPX/hemopexin. Interacts (when phosphorylated) with capsid protein ORF2. Interacts with host TSG101; this interaction plays a role in viral release from the host cell. Interacts with host SIRPA; this interaction down-regulates the phosphorylation of host IRF3. Post-translationally, palmitoylated in the N-terminus.

Its subcellular location is the host endoplasmic reticulum membrane. It localises to the host cytoplasm. The protein resides in the host cytoskeleton. The protein localises to the virion. It is found in the host cell membrane. In terms of biological role, small multifunctional phosphoprotein involved in virion morphogenesis, egress and counteracting host innate immunity. Plays critical roles in the final steps of viral release by interacting with host TSG101, a member of the vacuolar protein-sorting pathway and using other cellular host proteins involved in vesicle formation pathway. Also acts as a viroporin and forms ion conductive pores allowing viral particle release. Impairs the generation of type I interferon by down-regulating host TLR3 and TLR7 as well as their downstream signaling pathways. Down-regulates the phosphorylation of host IRF3 via the interaction with host SIRP-alpha, thereby inhibiting IFN-I expression. Interacts with host microtubules. The chain is Protein ORF3 from Hepatitis E virus genotype 2 (isolate Human/Mexico) (HEV-2).